The following is a 308-amino-acid chain: tRNA pseudouridine synthase B (308 aa).

The active-site Nucleophile is Asp49.

Belongs to the pseudouridine synthase TruB family. Type 1 subfamily.

It carries out the reaction uridine(55) in tRNA = pseudouridine(55) in tRNA. Its function is as follows. Responsible for synthesis of pseudouridine from uracil-55 in the psi GC loop of transfer RNAs. This Corynebacterium jeikeium (strain K411) protein is tRNA pseudouridine synthase B.